Consider the following 29-residue polypeptide: Protamine-like protein (29 aa).

The disordered stretch occupies residues methionine 1–arginine 29. A compositionally biased stretch (basic and acidic residues) spans proline 12–arginine 29.

This Escherichia coli (strain K12) protein is Protamine-like protein (tpr).